A 484-amino-acid polypeptide reads, in one-letter code: uncharacterized protein (484 aa).

An FAD-binding PCMH-type domain is found at Thr-47–Phe-226.

The protein belongs to the FAD-binding oxidoreductase/transferase type 4 family.

This is an uncharacterized protein from Escherichia coli O157:H7.